Here is a 365-residue protein sequence, read N- to C-terminus: MVPFLRILGIETSCDETAAAVVERDAEGNARVLSDVVLSQLDEHSAYGGVVPEIAARAHVEALDELIEEALNRANVSLDEVDAIAATSGPGLIGGLLVGLMTGKAIARAAGKPLYAVNHLEGHALTARLTDGLAFPYLMLLVSGGHTQLILVRGVGEYQRWGTTIDDALGEAFDKTAKLLGLPYPGGPAVERMARDGNPDRFAFPRPLVGEARLDFSFSGLKTAVRQAAQDIAPISDQDVADICASFQKAISRTLKDRIGRGLQRFKTEFAATDEKPALVVAGGVAANLELRGTLQALCDKNGFRFIAPPLHLCTDNAVMIAWAGLERMATGAAPDPLDVQPRSRWPLDSNAETLIGFGKRGAKA.

His119 and His123 together coordinate Fe cation. Substrate contacts are provided by residues 141 to 145 (LVSGG), Asp174, Gly187, and Asn288. Asp316 provides a ligand contact to Fe cation.

Belongs to the KAE1 / TsaD family. Requires Fe(2+) as cofactor.

It is found in the cytoplasm. It catalyses the reaction L-threonylcarbamoyladenylate + adenosine(37) in tRNA = N(6)-L-threonylcarbamoyladenosine(37) in tRNA + AMP + H(+). Required for the formation of a threonylcarbamoyl group on adenosine at position 37 (t(6)A37) in tRNAs that read codons beginning with adenine. Is involved in the transfer of the threonylcarbamoyl moiety of threonylcarbamoyl-AMP (TC-AMP) to the N6 group of A37, together with TsaE and TsaB. TsaD likely plays a direct catalytic role in this reaction. The chain is tRNA N6-adenosine threonylcarbamoyltransferase from Rhizobium leguminosarum bv. trifolii (strain WSM2304).